Here is a 128-residue protein sequence, read N- to C-terminus: Lymphocyte antigen 6D (128 aa).

The N-terminal stretch at 1-20 (MKTVLLFLVALAAAAGPAQA) is a signal peptide. A UPAR/Ly6 domain is found at 21 to 108 (LRCHVCTSSS…WQSAAPARTS (88 aa)). 5 disulfides stabilise this stretch: C23–C45, C26–C32, C38–C63, C67–C86, and C87–C92. S98 carries the GPI-anchor amidated serine lipid modification. Positions 99–128 (WQSAAPARTSAHLGLALACGLLALLWAPGL) are cleaved as a propeptide — removed in mature form.

It localises to the cell membrane. In terms of biological role, may act as a specification marker at earliest stage specification of lymphocytes between B- and T-cell development. Marks the earliest stage of B-cell specification. The protein is Lymphocyte antigen 6D (LY6D) of Bos taurus (Bovine).